Consider the following 326-residue polypeptide: Polycomb complex protein BMI-1-A (326 aa).

The RING-type zinc-finger motif lies at 18 to 57; that stretch reads CVLCGGYFIDATTIIECLHSFCKTCIVRYLETSKYCPICD. The Nuclear localization signal signature appears at 81 to 95; sequence KLVPGLFKGEMKRRR. 2 disordered regions span residues 239-262 and 274-326; these read NPHT…DKAG and CIPS…ISSG. Residues 290–303 are compositionally biased toward low complexity; sequence ISSTINGTSSSSSS.

As to quaternary structure, component of a PRC1-like complex. Interacts with cbx4.

It localises to the nucleus. Its function is as follows. Component of a Polycomb group (PcG) multiprotein PRC1-like complex, a complex class required to maintain the transcriptionally repressive state of many genes, including Hox genes, throughout development. PcG PRC1 complex acts via chromatin remodeling and modification of histones; it mediates monoubiquitination of histone H2A 'Lys-119', rendering chromatin heritably changed in its expressibility. In the PRC1 complex, it is required to stimulate the E3 ubiquitin-protein ligase activity of rnf2. The protein is Polycomb complex protein BMI-1-A (bmi1a) of Xenopus laevis (African clawed frog).